The primary structure comprises 210 residues: Imidazole glycerol phosphate synthase subunit HisH (210 aa).

The region spanning 1-210 is the Glutamine amidotransferase type-1 domain; the sequence is MIAILDYGMG…KLLENFIRFI (210 aa). Residue Cys-79 is the Nucleophile of the active site. Catalysis depends on residues His-191 and Glu-193.

Heterodimer of HisH and HisF.

Its subcellular location is the cytoplasm. The catalysed reaction is 5-[(5-phospho-1-deoxy-D-ribulos-1-ylimino)methylamino]-1-(5-phospho-beta-D-ribosyl)imidazole-4-carboxamide + L-glutamine = D-erythro-1-(imidazol-4-yl)glycerol 3-phosphate + 5-amino-1-(5-phospho-beta-D-ribosyl)imidazole-4-carboxamide + L-glutamate + H(+). The enzyme catalyses L-glutamine + H2O = L-glutamate + NH4(+). It functions in the pathway amino-acid biosynthesis; L-histidine biosynthesis; L-histidine from 5-phospho-alpha-D-ribose 1-diphosphate: step 5/9. In terms of biological role, IGPS catalyzes the conversion of PRFAR and glutamine to IGP, AICAR and glutamate. The HisH subunit catalyzes the hydrolysis of glutamine to glutamate and ammonia as part of the synthesis of IGP and AICAR. The resulting ammonia molecule is channeled to the active site of HisF. This is Imidazole glycerol phosphate synthase subunit HisH from Leptospira interrogans serogroup Icterohaemorrhagiae serovar copenhageni (strain Fiocruz L1-130).